A 642-amino-acid polypeptide reads, in one-letter code: MAEAAPAPTSEWDSECLTSLQPLPLPTPPAANEAHLQTAAISLWTVVAAVQAIERKVEIHSRRLLHLEGRTGTAEKKLASCEKTVTELGNQLEGKWAVLGTLLQEYGLLQRRLENLENLLRNRNFWILRLPPGIKGDIPKVPVAFDDVSIYFSTPEWEKLEEWQKELYKNIMKGNYESLISMDYAINQPDVLSQIQPEGEHNTEDQAGPEESEIPTDPSEEPGISTSDILSWIKQEEEPQVGAPPESKESDVYKSTYADEELVIKAEGLARSSLCPEVPVPFSSPPAAAKDAFSDVAFKSQQSTSMTPFGRPATDLPEASEGQVTFTQLGSYPLPPPVGEQVFSCHHCGKNLSQDMLLTHQCSHATEHPLPCAQCPKHFTPQADLSSTSQDHASETPPTCPHCARTFTHPSRLTYHLRVHNSTERPFPCPDCPKRFADQARLTSHRRAHASERPFRCAQCGRSFSLKISLLLHQRGHAQERPFSCPQCGIDFNGHSALIRHQMIHTGERPYPCTDCSKSFMRKEHLLNHRRLHTGERPFSCPHCGKSFIRKHHLMKHQRIHTGERPYPCSYCGRSFRYKQTLKDHLRSGHNGGCGGDSDPSGQPPNPPGPLITGLETSGLGVNTEGLETNQWYGEGSGGGVL.

2 disordered regions span residues 1-24 (MAEAAPAPTSEWDSECLTSLQPLP) and 198-225 (EGEHNTEDQAGPEESEIPTDPSEEPGIS). Positions 143 to 214 (VAFDDVSIYF…DQAGPEESEI (72 aa)) constitute a KRAB domain. Over residues 207 to 220 (AGPEESEIPTDPSE) the composition is skewed to acidic residues. K265 is covalently cross-linked (Glycyl lysine isopeptide (Lys-Gly) (interchain with G-Cter in SUMO2)). The segment at 343-364 (FSCHHCGKNLSQDMLLTHQCSH) adopts a C2H2-type 1; atypical zinc-finger fold. A C2H2-type 2; degenerate zinc finger spans residues 370–392 (LPCAQCPKHFTPQADLSSTSQDH). 7 C2H2-type zinc fingers span residues 398-420 (PTCPHCARTFTHPSRLTYHLRVH), 427-449 (FPCPDCPKRFADQARLTSHRRAH), 455-477 (FRCAQCGRSFSLKISLLLHQRGH), 483-505 (FSCPQCGIDFNGHSALIRHQMIH), 511-533 (YPCTDCSKSFMRKEHLLNHRRLH), 539-561 (FSCPHCGKSFIRKHHLMKHQRIH), and 567-590 (YPCSYCGRSFRYKQTLKDHLRSGH). The interval 587-615 (RSGHNGGCGGDSDPSGQPPNPPGPLITGL) is disordered.

Belongs to the krueppel C2H2-type zinc-finger protein family.

Its subcellular location is the nucleus. In terms of biological role, functions as a transcriptional activator. This is Zinc finger protein 398 (ZNF398) from Homo sapiens (Human).